Consider the following 115-residue polypeptide: Holo-[acyl-carrier-protein] synthase (115 aa).

The Mg(2+) site is built by Asp-5 and Glu-51.

The protein belongs to the P-Pant transferase superfamily. AcpS family. It depends on Mg(2+) as a cofactor.

It localises to the cytoplasm. The catalysed reaction is apo-[ACP] + CoA = holo-[ACP] + adenosine 3',5'-bisphosphate + H(+). Its function is as follows. Transfers the 4'-phosphopantetheine moiety from coenzyme A to a Ser of acyl-carrier-protein. This Helicobacter acinonychis (strain Sheeba) protein is Holo-[acyl-carrier-protein] synthase.